Consider the following 63-residue polypeptide: Beta-defensin 4 (63 aa).

Positions 1-22 (MRIHYLLFTFLLVLLSPLAAFT) are cleaved as a signal peptide. Residue glutamine 23 is modified to Pyrrolidone carboxylic acid. Intrachain disulfides connect cysteine 31–cysteine 59, cysteine 38–cysteine 52, and cysteine 42–cysteine 60.

The protein belongs to the beta-defensin family. In terms of tissue distribution, tongue, esophagus and trachea.

It is found in the secreted. Functionally, exhibits antimicrobial activity against Gram-negative bacteria and Gram-positive bacteria. May act as a ligand for C-C chemokine receptor CCR6. Can bind to mouse (but not human) CCR6 and induce chemotactic activity of CCR6-expressing cells. In Mus musculus (Mouse), this protein is Beta-defensin 4 (Defb4).